The sequence spans 932 residues: MAAPTKCQLRGRLVLLCSLLGMLWEARASQIRYSVPEETEKGYIVGNISKDLALEPRELAERRVRIVSRGRTQLFSLNPRSGTLVTAGRIDREELCAQSPRCLVNFKVLVEDRVKLYGIEIEVTDINDSAPKFQAESLEVKINEIAVPGARYPLPEAIDPDVGVNSLQSYQLSPNHHFSLNVQTGDNGAINPELVLERALDREEATAHHLVLTASDGGEPRRSSTVRIHVTVLDTNDNAPVFAQRIYRVKVLENVPPGTWLLTATASDLDEGINGKVAYKFWKINEKQSLLFQLNENTGEISTAKSLDYEECSFYEMEIQAEDGGGLKGWTKVLISVEDVNDNRPEVTITSLFSPVREDAPQGTVILLFNAHDRDSGKNGQVVCSIQENLSFTLENSEEDYYRLLTAQILDREKASEYNITVTATDRGTPPLSTEIHITLQVTDINDNPPAFSQASYSVYLPENNARGTSIFSVIAYDPDSNENSRVIYSLAEDTIQGSPLSTYVSINSDTGVLYALCSFDYEQFRDLQMQVTASDSGSPPLSSNVSLRLFVLDQNDNAPEILYPALPTDGSTGVELAPRSAEPGYLVTKVVAVDRDSGQNAWLSYRLFKASEPGLFSVGLHTGEVRTARALLDRDALKQSLVVAVQDHGQPPLSATVTLTVAIADSIPDILADLGSLQIPADLEASDLTLYLVVAVAVVSCVFLTFVITLLALRLRHWHSSHLLRATSDGLAGVPTSHFVGVDGVRAFLQTYSQEFSLTADSRKSHLIFPQPNYADTLISQQSCEKNEPLCVSVDSKFPIEDTPLVPQAPPNTDWRFSQAQRPGTSGSQNGDDTGTWPNNQFDTEMLQAMILASASEAADGSSTLGGGAGTMGLSARYGPQFTLQHVPDYRQNVYIPGSNATLTNAAGKRDGKAPAGGNGNKKKSGKKEKK.

An N-terminal signal peptide occupies residues 1–28; the sequence is MAAPTKCQLRGRLVLLCSLLGMLWEARA. Cadherin domains lie at 29 to 133, 134 to 242, 243 to 347, 348 to 452, 453 to 562, and 570 to 683; these read SQIR…APKF, QAES…APVF, AQRI…RPEV, TITS…PPAF, SQAS…APEI, and DGST…IPAD. Residues 29 to 692 are Extracellular-facing; the sequence is SQIRYSVPEE…DLEASDLTLY (664 aa). N47 and N127 each carry an N-linked (GlcNAc...) asparagine glycan. N-linked (GlcNAc...) asparagine glycans are attached at residues N389, N419, and N545. Residues 693–713 traverse the membrane as a helical segment; the sequence is LVVAVAVVSCVFLTFVITLLA. At 714 to 932 the chain is on the cytoplasmic side; sequence LRLRHWHSSH…KKKSGKKEKK (219 aa). Disordered stretches follow at residues 803 to 841 and 902 to 932; these read DTPLVPQAPPNTDWRFSQAQRPGTSGSQNGDDTGTWPNN and ATLTNAAGKRDGKAPAGGNGNKKKSGKKEKK. The span at 816 to 841 shows a compositional bias: polar residues; it reads WRFSQAQRPGTSGSQNGDDTGTWPNN. Over residues 922–932 the composition is skewed to basic residues; sequence NKKKSGKKEKK.

Its subcellular location is the cell membrane. Potential calcium-dependent cell-adhesion protein. May be involved in the establishment and maintenance of specific neuronal connections in the brain. This is Protocadherin gamma-A9 (PCDHGA9) from Homo sapiens (Human).